Here is a 376-residue protein sequence, read N- to C-terminus: Chaperone protein DnaJ (376 aa).

In terms of domain architecture, J spans 5-70 (DYYEVLGVAR…EKRARYDRFG (66 aa)). A CR-type zinc finger spans residues 137-215 (GDEVTLRLPK…CKGSGQTQQV (79 aa)). Zn(2+) contacts are provided by cysteine 150, cysteine 153, cysteine 167, cysteine 170, cysteine 189, cysteine 192, cysteine 203, and cysteine 206. 4 CXXCXGXG motif repeats span residues 150–157 (CDECGGSG), 167–174 (CRHCGGAG), 189–196 (CPVCRGEG), and 203–210 (CPKCKGSG).

It belongs to the DnaJ family. As to quaternary structure, homodimer. Requires Zn(2+) as cofactor.

The protein resides in the cytoplasm. In terms of biological role, participates actively in the response to hyperosmotic and heat shock by preventing the aggregation of stress-denatured proteins and by disaggregating proteins, also in an autonomous, DnaK-independent fashion. Unfolded proteins bind initially to DnaJ; upon interaction with the DnaJ-bound protein, DnaK hydrolyzes its bound ATP, resulting in the formation of a stable complex. GrpE releases ADP from DnaK; ATP binding to DnaK triggers the release of the substrate protein, thus completing the reaction cycle. Several rounds of ATP-dependent interactions between DnaJ, DnaK and GrpE are required for fully efficient folding. Also involved, together with DnaK and GrpE, in the DNA replication of plasmids through activation of initiation proteins. This is Chaperone protein DnaJ from Nitratidesulfovibrio vulgaris (strain ATCC 29579 / DSM 644 / CCUG 34227 / NCIMB 8303 / VKM B-1760 / Hildenborough) (Desulfovibrio vulgaris).